The primary structure comprises 289 residues: Nodulation protein NolT (289 aa).

The signal sequence occupies residues 1 to 33 (MFGSAHGDTTSSDTSGRRPLRLVVLPLLLALSS). The N-palmitoyl cysteine moiety is linked to residue C34. A lipid anchor (S-diacylglycerol cysteine) is attached at C34. A helical transmembrane segment spans residues 233 to 253 (VAVGVSAAVFAVTCYLLFIVL).

The protein belongs to the YscJ lipoprotein family.

It is found in the cell outer membrane. The chain is Nodulation protein NolT (nolT) from Sinorhizobium fredii (strain NBRC 101917 / NGR234).